The chain runs to 561 residues: Transmembrane protein 151B (561 aa).

A compositionally biased stretch (low complexity) spans 1–10 (MSPPGSAAGE). The disordered stretch occupies residues 1–42 (MSPPGSAAGESAGGGGGGGGSGVPEEPMASADEGPAREEQRP). Residues 11–22 (SAGGGGGGGGSG) show a composition bias toward gly residues. The next 2 helical transmembrane spans lie at 59 to 79 (CLLL…CHVT) and 106 to 126 (YVYI…VECW). Residues 489-507 (VNEASCPTEQTRLSSQASM) show a composition bias toward polar residues. Positions 489–523 (VNEASCPTEQTRLSSQASMRDNEEDEDEEEAGPPP) are disordered. A compositionally biased stretch (acidic residues) spans 510 to 519 (NEEDEDEEEA).

This sequence belongs to the TMEM151 family.

The protein localises to the membrane. The polypeptide is Transmembrane protein 151B (Tmem151b) (Mus musculus (Mouse)).